A 932-amino-acid polypeptide reads, in one-letter code: MIPARLHRDYKGLVLLGILLGTLWETGCTQIRYSVPEELEKGSRVGDISRDLGLEPRELAERGVRIIPRGRTQLFALNPRSGSLVTAGRIDREELCMGAIKCQLNLDILMEDKVKIYGVEVEVRDINDNAPYFRESELEIKISENAATEMRFPLPHAWDPDIGKNSLQSYELSPNTHFSLIVQNGADGSKYPELVLKRALDREEKAAHHLVLTASDGGDPVRTGTARIRVMVLDANDNAPAFAQPEYRASVPENLALGTQLLVVNATDPDEGVNAEVRYSFRYVDDKAAQVFKLDCNSGTISTIGELDHEESGFYQMEVQAMDNAGYSARAKVLITVLDVNDNAPEVVLTSLASSVPENSPRGTLIALLNVNDQDSEENGQVICFIQGNLPFKLEKSYGNYYSLVTDIVLDREQVPSYNITVTATDRGTPPLSTETHISLNVADTNDNPPVFPQASYSAYIPENNPRGVSLVSVTAHDPDCEENAQITYSLAENTIQGASLSSYVSINSDTGVLYALSSFDYEQFRDLQVKVMARDNGHPPLSSNVSLSLFVLDQNDNAPEILYPALPTDGSTGVELAPRSAEPGYLVTKVVAVDRDSGQNAWLSYRLLKASEPGLFSVGLHTGEVRTARALLDRDALKQSLVVAVQDHGQPPLSATVTLTVAVADSIPQVLADLGSLESPANSETSDLTLYLVVAVAAVSCVFLAFVILLLALRLRRWHKSRLLQASGGGLTGAPASHFVGVDGVQAFLQTYSHEVSLTTDSRKSHLIFPQPNYADMLVSQESFEKSEPLLLSGDSVFSKDSHGLIEQAPPNTDWRFSQAQRPGTSGSQNGDDTGTWPNNQFDTEMLQAMILASASEAADGSSTLGGGAGTMGLSARYGPQFTLQHVPDYRQNVYIPGSNATLTNAAGKRDGKAPAGGNGNKKKSGKKEKK.

Residues 1–29 (MIPARLHRDYKGLVLLGILLGTLWETGCT) form the signal peptide. Cadherin domains are found at residues 30 to 133 (QIRY…APYF), 134 to 242 (RESE…APAF), 243 to 347 (AQPE…APEV), 348 to 452 (VLTS…PPVF), 453 to 562 (PQAS…APEI), and 570 to 683 (DGST…SPAN). The Extracellular portion of the chain corresponds to 30 to 692 (QIRYSVPEEL…NSETSDLTLY (663 aa)). 3 N-linked (GlcNAc...) asparagine glycosylation sites follow: N265, N419, and N545. The helical transmembrane segment at 693 to 713 (LVVAVAAVSCVFLAFVILLLA) threads the bilayer. At 714–932 (LRLRRWHKSR…KKKSGKKEKK (219 aa)) the chain is on the cytoplasmic side. Disordered stretches follow at residues 803 to 841 (SHGL…WPNN) and 902 to 932 (ATLT…KEKK). Positions 816–841 (WRFSQAQRPGTSGSQNGDDTGTWPNN) are enriched in polar residues. A compositionally biased stretch (basic residues) spans 922 to 932 (NKKKSGKKEKK).

It is found in the cell membrane. Potential calcium-dependent cell-adhesion protein. May be involved in the establishment and maintenance of specific neuronal connections in the brain. This Homo sapiens (Human) protein is Protocadherin gamma-A12 (PCDHGA12).